Reading from the N-terminus, the 556-residue chain is Trigger factor (556 aa).

Residues 169-255 enclose the PPIase FKBP-type domain; sequence GDVVVIDFAA…LREIKAKELP (87 aa). A compositionally biased stretch (polar residues) spans 438–452; the sequence is VDSEGNPTQAPTSLA. The interval 438-556 is disordered; that stretch reads VDSEGNPTQA…KPSKKDKKGK (119 aa). Residues 461–472 are compositionally biased toward acidic residues; the sequence is PEAEFEADEPEA. Composition is skewed to low complexity over residues 486–503 and 511–526; these read ETAT…AEAE and EASP…AEAT.

It belongs to the FKBP-type PPIase family. Tig subfamily.

It is found in the cytoplasm. It catalyses the reaction [protein]-peptidylproline (omega=180) = [protein]-peptidylproline (omega=0). Involved in protein export. Acts as a chaperone by maintaining the newly synthesized protein in an open conformation. Functions as a peptidyl-prolyl cis-trans isomerase. This is Trigger factor from Synechococcus sp. (strain JA-2-3B'a(2-13)) (Cyanobacteria bacterium Yellowstone B-Prime).